Consider the following 158-residue polypeptide: NADH-quinone oxidoreductase subunit B (158 aa).

The [4Fe-4S] cluster site is built by cysteine 36, cysteine 37, cysteine 101, and cysteine 131.

This sequence belongs to the complex I 20 kDa subunit family. NDH-1 is composed of 14 different subunits. Subunits NuoB, C, D, E, F, and G constitute the peripheral sector of the complex. Requires [4Fe-4S] cluster as cofactor.

The protein resides in the cell inner membrane. It catalyses the reaction a quinone + NADH + 5 H(+)(in) = a quinol + NAD(+) + 4 H(+)(out). Its function is as follows. NDH-1 shuttles electrons from NADH, via FMN and iron-sulfur (Fe-S) centers, to quinones in the respiratory chain. The immediate electron acceptor for the enzyme in this species is believed to be ubiquinone. Couples the redox reaction to proton translocation (for every two electrons transferred, four hydrogen ions are translocated across the cytoplasmic membrane), and thus conserves the redox energy in a proton gradient. The sequence is that of NADH-quinone oxidoreductase subunit B from Francisella tularensis subsp. tularensis (strain FSC 198).